The following is a 275-amino-acid chain: Large ribosomal subunit protein uL2 (275 aa).

Disordered stretches follow at residues 1 to 20 and 214 to 275; these read MAVK…TTAD and WLGR…TRRK. Residues 255–275 show a composition bias toward basic residues; it reads KGLKTRRKRKTSDRFIVTRRK.

The protein belongs to the universal ribosomal protein uL2 family. In terms of assembly, part of the 50S ribosomal subunit. Forms a bridge to the 30S subunit in the 70S ribosome.

One of the primary rRNA binding proteins. Required for association of the 30S and 50S subunits to form the 70S ribosome, for tRNA binding and peptide bond formation. It has been suggested to have peptidyltransferase activity; this is somewhat controversial. Makes several contacts with the 16S rRNA in the 70S ribosome. This chain is Large ribosomal subunit protein uL2 (rplB), found in Deinococcus radiodurans (strain ATCC 13939 / DSM 20539 / JCM 16871 / CCUG 27074 / LMG 4051 / NBRC 15346 / NCIMB 9279 / VKM B-1422 / R1).